A 332-amino-acid polypeptide reads, in one-letter code: MVRVAINGFGRIGRLVMRIALSRPNVEVVALNDPFITNDYAAYMFKYDSTHGRYAGEVSHDDKHIIVDGKKIATYQERDPANLPWGSSNVDIAIDSTGVFKELDTAQKHIDAGAKKVVITAPSSTAPMFVMGVNEEKYTSDLKIVSNASCTTNCLAPLAKVINDAFGIEEGLMTTVHSLTATQKTVDGPSHKDWRGGRTASGNIIPSSTGAAKAVGKVLPELQGKLTGMAFRVPTVDVSVVDLTVKLNKETTYDEIKKVVKAAAEGKLKGVLGYTEDAVVSSDFLGDSHSSIFDASAGIQLSPKFVKLVSWYDNEYGYSTRVVDLVEHVAKA.

NAD(+)-binding residues include R11, I12, and D33. Glycyl lysine isopeptide (Lys-Gly) (interchain with G-Cter in ubiquitin) cross-links involve residues K46 and K63. T120 is an NAD(+) binding site. 149–151 is a D-glyceraldehyde 3-phosphate binding site; the sequence is SCT. C150 acts as the Nucleophile in catalysis. Cysteine persulfide is present on residues C150 and C154. Residue K160 forms a Glycyl lysine isopeptide (Lys-Gly) (interchain with G-Cter in URM1) linkage. D-glyceraldehyde 3-phosphate is bound by residues T180, 209–210, and R232; that span reads TG. At S302 the chain carries Phosphoserine. K307 is covalently cross-linked (Glycyl lysine isopeptide (Lys-Gly) (interchain with G-Cter in URM1)). 2 residues coordinate NAD(+): N314 and Y318.

Belongs to the glyceraldehyde-3-phosphate dehydrogenase family. As to quaternary structure, homotetramer. Conjugated to URM1, a ubiquitin-like protein, in response to oxidative stresses. The attachment of URM1 to lysine residues exclusively depends on the presence of a peroxidatic cysteine in the target protein, with low specificity for the particular residue, motif, or structural context at which urmylation can occur. The URM1-conjugation reaction is mechanistically and directly coupled to the process of cysteine persulfidation, transfering the sulfur atom of the URM1 thiocarboxyl group to redox-active cysteine residues in the target protein if it is exposed to oxidative conditions. In terms of processing, persulfidated on specific redox-active cysteine residues. Persulfidation (also called protein S-sulfhydration) may provide a molecular mechanism that enables cells to protect vulnerable cysteine residues from reactive oxygen species (ROS) under stress conditions.

The protein resides in the cytoplasm. Its subcellular location is the mitochondrion. It catalyses the reaction D-glyceraldehyde 3-phosphate + phosphate + NAD(+) = (2R)-3-phospho-glyceroyl phosphate + NADH + H(+). The enzyme catalyses NADH + H2O = (6R)-NADHX. The catalysed reaction is NADH + H2O = (6S)-NADHX. It carries out the reaction NADPH + H2O = (6R)-NADPHX. It catalyses the reaction NADPH + H2O = (6S)-NADPHX. Its pathway is carbohydrate degradation; glycolysis; pyruvate from D-glyceraldehyde 3-phosphate: step 1/5. In terms of biological role, glyceraldehyde-3-phosphate dehydrogenase (GAPDH) involved in glycolysis and gluconeogenesis. Catalyzes the reaction of glyceraldehyde-3-phosphate to 1,3 bis-phosphoglycerate. The contribution of the TDH1, TDH2, and TDH3 to the total glyceraldehyde-3-phosphate dehydrogenase activity is 10-15, 25-30, and 50-60%, respectively. Functionally, as a side activity, catalyzes the hydration of the nicotinamide ring of NADH or NADPH at the C6 position to give the corresponding hydrates, NADHX and NADPHX, which exist as R and S epimers, that cannot act as electron donors or acceptors and inhibit several dehydrogenases, making them toxic. This Saccharomyces cerevisiae (strain ATCC 204508 / S288c) (Baker's yeast) protein is Glyceraldehyde-3-phosphate dehydrogenase 3.